Reading from the N-terminus, the 513-residue chain is ATP synthase subunit alpha (513 aa).

An ATP-binding site is contributed by 169–176; that stretch reads GDRQCGKT.

It belongs to the ATPase alpha/beta chains family. As to quaternary structure, F-type ATPases have 2 components, CF(1) - the catalytic core - and CF(0) - the membrane proton channel. CF(1) has five subunits: alpha(3), beta(3), gamma(1), delta(1), epsilon(1). CF(0) has three main subunits: a(1), b(2) and c(9-12). The alpha and beta chains form an alternating ring which encloses part of the gamma chain. CF(1) is attached to CF(0) by a central stalk formed by the gamma and epsilon chains, while a peripheral stalk is formed by the delta and b chains.

It localises to the cell inner membrane. The catalysed reaction is ATP + H2O + 4 H(+)(in) = ADP + phosphate + 5 H(+)(out). Produces ATP from ADP in the presence of a proton gradient across the membrane. The alpha chain is a regulatory subunit. The sequence is that of ATP synthase subunit alpha from Burkholderia ambifaria (strain MC40-6).